The chain runs to 1331 residues: X-linked retinitis pigmentosa GTPase regulator-interacting protein 1 (1331 aa).

3 disordered regions span residues 1–165 (MQHL…PPAF), 183–220 (SQLTHTMTTDSTHVEEIPRSPEKTSKVEKPEQRSSEEC), and 351–374 (HQPLDSSHQPHWSTELTGKQLPPQ). Basic and acidic residues predominate over residues 41-67 (NQKELNCRRLHLHEEPTLVKEPSPKQR). Polar residues-rich tracts occupy residues 77–86 (VQRSTTTQPD) and 183–193 (SQLTHTMTTDS). Positions 194–220 (THVEEIPRSPEKTSKVEKPEQRSSEEC) are enriched in basic and acidic residues. 2 coiled-coil regions span residues 236-352 (ELIR…SSHQ) and 498-546 (MCYQ…LRSH). A compositionally biased stretch (polar residues) spans 351 to 367 (HQPLDSSHQPHWSTELT). The C2 domain maps to 745–870 (GARKVQSNES…AQNKSIKGDF (126 aa)). 2 disordered regions span residues 899–1057 (FQMS…VQDK) and 1088–1146 (AEDG…SDDI). Residues 908 to 999 (EGEEKEEEGG…DVLEASFTEE (92 aa)) adopt a coiled-coil conformation. The span at 910-988 (EEKEEEGGEE…EEEEEEEDEN (79 aa)) shows a compositional bias: acidic residues. Composition is skewed to basic and acidic residues over residues 1022–1039 (PEKRKPPVIAEKKEREHQ) and 1088–1115 (AEDGGLKAQDKREEPPSPRSALRQEHPS). Polar residues predominate over residues 1129-1141 (CEQASEVSETQTT). Residues 1136-1326 (SETQTTDSDD…ALHGIYKEMT (191 aa)) form an interaction with RPGR region.

This sequence belongs to the RPGRIP1 family. In terms of assembly, interacts with NPHP4. Interacts with NEK4. Forms homodimers and elongated homopolymers. Interacts with RPGR. Interacts with SPATA7. Interacts with CEP290/NPHP6; mediating the association between RPGR and CEP290/NPHP6. As to expression, expressed in the retina (at protein level).

The protein resides in the cell projection. It is found in the cilium. In terms of biological role, may function as scaffolding protein. Required for normal location of RPGR at the connecting cilium of photoreceptor cells. Required for normal disk morphogenesis and disk organization in the outer segment of photoreceptor cells and for survival of photoreceptor cells. The chain is X-linked retinitis pigmentosa GTPase regulator-interacting protein 1 (Rpgrip1) from Mus musculus (Mouse).